An 85-amino-acid chain; its full sequence is Putative transmembrane protein ORF85 (85 aa).

2 helical membrane-spanning segments follow: residues 12–32 (FPPT…KFLS) and 44–64 (LGII…GAGI).

The protein localises to the host membrane. The polypeptide is Putative transmembrane protein ORF85 (Acidianus convivator (ABV)).